We begin with the raw amino-acid sequence, 497 residues long: Lysine--tRNA ligase (497 aa).

E409 and E416 together coordinate Mg(2+).

It belongs to the class-II aminoacyl-tRNA synthetase family. In terms of assembly, homodimer. Requires Mg(2+) as cofactor.

The protein localises to the cytoplasm. The enzyme catalyses tRNA(Lys) + L-lysine + ATP = L-lysyl-tRNA(Lys) + AMP + diphosphate. This chain is Lysine--tRNA ligase, found in Streptococcus pyogenes serotype M3 (strain ATCC BAA-595 / MGAS315).